We begin with the raw amino-acid sequence, 323 residues long: Transcription factor JunD (323 aa).

2 disordered regions span residues 138 to 173 and 197 to 221; these read QNQL…APGL and PFAA…QIVP. The segment covering 141 to 167 has biased composition (gly residues); the sequence is LGGGGGPNGGAAAAGGGGGGGGGGGGE. The segment covering 198–212 has biased composition (pro residues); sequence FAAPPPRLPPPPPPP. The basic motif stretch occupies residues 242 to 269; it reads RIKAERKRLRNRIAASKCRKRKLERISR. Positions 242-305 constitute a bZIP domain; the sequence is RIKAERKRLR…AQLKQKVLSH (64 aa). The leucine-zipper stretch occupies residues 270–298; the sequence is LEEKVKSLKSQNTELASTASLLREQVAQL.

It belongs to the bZIP family. Jun subfamily. Binds DNA as a dimer.

Its subcellular location is the nucleus. The sequence is that of Transcription factor JunD (JUND) from Gallus gallus (Chicken).